Reading from the N-terminus, the 316-residue chain is Putative ring-cleaving dioxygenase MhqA (316 aa).

VOC domains follow at residues glycine 5–aspartate 131 and glycine 154–aspartate 278. Positions 8, 226, and 274 each coordinate Fe cation.

It belongs to the extradiol ring-cleavage dioxygenase family. Fe(2+) serves as cofactor.

The protein resides in the cytoplasm. In terms of biological role, putative ring-cleavage dioxygenase that may contribute to the degradation of aromatic compounds. The chain is Putative ring-cleaving dioxygenase MhqA (mhqA) from Bacillus subtilis (strain 168).